Reading from the N-terminus, the 291-residue chain is N-acetylmannosamine kinase (291 aa).

ATP contacts are provided by residues 5 to 12 (AIDIGGTK) and 132 to 139 (GVGGGVVS). The Zn(2+) site is built by H156, C166, C168, and C173.

It belongs to the ROK (NagC/XylR) family. NanK subfamily. As to quaternary structure, homodimer.

It carries out the reaction an N-acyl-D-mannosamine + ATP = an N-acyl-D-mannosamine 6-phosphate + ADP + H(+). The protein operates within amino-sugar metabolism; N-acetylneuraminate degradation; D-fructose 6-phosphate from N-acetylneuraminate: step 2/5. Its function is as follows. Catalyzes the phosphorylation of N-acetylmannosamine (ManNAc) to ManNAc-6-P. This is N-acetylmannosamine kinase from Escherichia coli O1:K1 / APEC.